A 574-amino-acid polypeptide reads, in one-letter code: Proline--tRNA ligase (574 aa).

Belongs to the class-II aminoacyl-tRNA synthetase family. ProS type 1 subfamily. Homodimer.

The protein localises to the cytoplasm. It carries out the reaction tRNA(Pro) + L-proline + ATP = L-prolyl-tRNA(Pro) + AMP + diphosphate. Functionally, catalyzes the attachment of proline to tRNA(Pro) in a two-step reaction: proline is first activated by ATP to form Pro-AMP and then transferred to the acceptor end of tRNA(Pro). As ProRS can inadvertently accommodate and process non-cognate amino acids such as alanine and cysteine, to avoid such errors it has two additional distinct editing activities against alanine. One activity is designated as 'pretransfer' editing and involves the tRNA(Pro)-independent hydrolysis of activated Ala-AMP. The other activity is designated 'posttransfer' editing and involves deacylation of mischarged Ala-tRNA(Pro). The misacylated Cys-tRNA(Pro) is not edited by ProRS. The sequence is that of Proline--tRNA ligase from Nitratidesulfovibrio vulgaris (strain ATCC 29579 / DSM 644 / CCUG 34227 / NCIMB 8303 / VKM B-1760 / Hildenborough) (Desulfovibrio vulgaris).